The sequence spans 60 residues: Bowman-Birk type proteinase inhibitor C1 (60 aa).

Cystine bridges form between Cys-5/Cys-21, Cys-11/Cys-19, Cys-28/Cys-35, and Cys-32/Cys-49.

It belongs to the Bowman-Birk serine protease inhibitor family. In terms of tissue distribution, expressed in bulb (at protein level).

Its function is as follows. Serine protease inhibitor. Strongly inhibits trypsin (Ki = 0.22 nM) and very weakly inhibits chymotrypsin (Ki = 1200 nM). Does not inhibit bacterial subtilisin. This Hyacinthus orientalis (Common hyacinth) protein is Bowman-Birk type proteinase inhibitor C1.